The chain runs to 176 residues: Large ribosomal subunit protein uL16 (176 aa).

It belongs to the universal ribosomal protein uL16 family.

The chain is Large ribosomal subunit protein uL16 from Picrophilus torridus (strain ATCC 700027 / DSM 9790 / JCM 10055 / NBRC 100828 / KAW 2/3).